Consider the following 1181-residue polypeptide: 1-phosphatidylinositol 4,5-bisphosphate phosphodiesterase beta-2 (1181 aa).

The PI-PLC X-box domain maps to 312 to 463; sequence QDMTQPLNHY…LRGKILIKNK (152 aa). Residue histidine 327 is part of the active site. Ca(2+) contacts are provided by asparagine 328, glutamate 357, and aspartate 359. Histidine 374 is an active-site residue. Glutamate 408 lines the Ca(2+) pocket. Residues 465–534 are disordered; it reads NQFSGPASPS…EEIKKMQSDE (70 aa). The span at 503-525 shows a compositional bias: acidic residues; the sequence is TEVEEEEVVEEEEEEESGNLDEE. A PI-PLC Y-box domain is found at 547-663; it reads MSSLVNYIQP…GYLLKHEFMR (117 aa). The region spanning 666 to 791 is the C2 domain; that stretch reads DKQFNPFSVD…CLRSESNMAL (126 aa). Positions 847–890 are disordered; the sequence is SGTPVASQSNGAPVSAGNGSTAPGTKATGEEATKEVTEPQTASL. Positions 850–869 are enriched in polar residues; sequence PVASQSNGAPVSAGNGSTAP. Residues 874–883 are compositionally biased toward basic and acidic residues; the sequence is TGEEATKEVT. The stretch at 893 to 940 forms a coiled coil; it reads LRELKGVVKLQRRHEKELRELERRGARRWEELLQRGAAQLAELQTQAA. Serine 950 carries the post-translational modification Phosphoserine. Coiled coils occupy residues 974–1026 and 1075–1141; these read PRVQ…AELK and HIQE…VRAY. The disordered stretch occupies residues 1149-1181; the sequence is EAEDKPERSCEASEESCPQEPLVSKADTQESRL. The span at 1150 to 1159 shows a compositional bias: basic and acidic residues; that stretch reads AEDKPERSCE.

In terms of assembly, interacts with RAC1. Forms a complex composed of at least WDR26, a G-beta:gamma unit, and PLCB2. Ca(2+) serves as cofactor.

It catalyses the reaction a 1,2-diacyl-sn-glycero-3-phospho-(1D-myo-inositol-4,5-bisphosphate) + H2O = 1D-myo-inositol 1,4,5-trisphosphate + a 1,2-diacyl-sn-glycerol + H(+). The enzyme catalyses a 1,2-diacyl-sn-glycero-3-phospho-(1D-myo-inositol) + H2O = 1D-myo-inositol 1-phosphate + a 1,2-diacyl-sn-glycerol + H(+). Functionally, the production of the second messenger molecules diacylglycerol (DAG) and inositol 1,4,5-trisphosphate (IP3) is mediated by activated phosphatidylinositol-specific phospholipase C enzymes. In neutrophils, participates in a phospholipase C-activating N-formyl peptide-activated GPCR (G protein-coupled receptor) signaling pathway by promoting RASGRP4 activation by DAG, to promote neutrophil functional responses. This chain is 1-phosphatidylinositol 4,5-bisphosphate phosphodiesterase beta-2, found in Mus musculus (Mouse).